The sequence spans 430 residues: Asparagine--tRNA ligase (430 aa).

The protein belongs to the class-II aminoacyl-tRNA synthetase family. As to quaternary structure, homodimer.

Its subcellular location is the cytoplasm. The enzyme catalyses tRNA(Asn) + L-asparagine + ATP = L-asparaginyl-tRNA(Asn) + AMP + diphosphate + H(+). This is Asparagine--tRNA ligase from Shouchella clausii (strain KSM-K16) (Alkalihalobacillus clausii).